The sequence spans 250 residues: Small ribosomal subunit protein uS2 (250 aa).

The protein belongs to the universal ribosomal protein uS2 family.

In Chloroherpeton thalassium (strain ATCC 35110 / GB-78), this protein is Small ribosomal subunit protein uS2.